Reading from the N-terminus, the 181-residue chain is Probable calcium-binding protein CML16 (181 aa).

Residues 1–24 (MSNTTEKKMPQQQQVERPTALAPA) are disordered. EF-hand domains follow at residues 23 to 58 (PADA…IAPP), 63 to 98 (AGGR…GRGD), 100 to 135 (EHEA…IGEG), and 136 to 171 (CSAE…DAAA). Ca(2+) is bound by residues aspartate 36, aspartate 38, aspartate 40, arginine 42, glutamate 47, aspartate 76, aspartate 78, aspartate 80, glutamate 87, aspartate 113, aspartate 115, aspartate 117, arginine 119, glutamate 124, aspartate 149, aspartate 151, aspartate 153, cysteine 155, and glutamate 160.

In terms of biological role, potential calcium sensor. The chain is Probable calcium-binding protein CML16 (CML16) from Oryza sativa subsp. japonica (Rice).